The chain runs to 361 residues: Phosphoserine aminotransferase (361 aa).

Arg42 contributes to the L-glutamate binding site. Pyridoxal 5'-phosphate contacts are provided by residues 76 to 77 (AR), Trp102, Thr153, Asp173, and Gln196. The residue at position 197 (Lys197) is an N6-(pyridoxal phosphate)lysine. Residue 238-239 (NT) participates in pyridoxal 5'-phosphate binding.

Belongs to the class-V pyridoxal-phosphate-dependent aminotransferase family. SerC subfamily. As to quaternary structure, homodimer. Pyridoxal 5'-phosphate serves as cofactor.

It localises to the cytoplasm. The enzyme catalyses O-phospho-L-serine + 2-oxoglutarate = 3-phosphooxypyruvate + L-glutamate. It carries out the reaction 4-(phosphooxy)-L-threonine + 2-oxoglutarate = (R)-3-hydroxy-2-oxo-4-phosphooxybutanoate + L-glutamate. Its pathway is amino-acid biosynthesis; L-serine biosynthesis; L-serine from 3-phospho-D-glycerate: step 2/3. It participates in cofactor biosynthesis; pyridoxine 5'-phosphate biosynthesis; pyridoxine 5'-phosphate from D-erythrose 4-phosphate: step 3/5. In terms of biological role, catalyzes the reversible conversion of 3-phosphohydroxypyruvate to phosphoserine and of 3-hydroxy-2-oxo-4-phosphonooxybutanoate to phosphohydroxythreonine. This is Phosphoserine aminotransferase from Pectobacterium atrosepticum (strain SCRI 1043 / ATCC BAA-672) (Erwinia carotovora subsp. atroseptica).